A 366-amino-acid polypeptide reads, in one-letter code: Alcohol dehydrogenase (366 aa).

Zn(2+) is bound by residues Cys-41, His-62, Glu-63, and Asp-167.

This sequence belongs to the zinc-containing alcohol dehydrogenase family. Homotetramer. The cofactor is Zn(2+).

It carries out the reaction a primary alcohol + NAD(+) = an aldehyde + NADH + H(+). It catalyses the reaction a secondary alcohol + NAD(+) = a ketone + NADH + H(+). The catalysed reaction is (R,R)-butane-2,3-diol + NAD(+) = (R)-acetoin + NADH + H(+). The enzyme catalyses an aldehyde + NAD(+) + H2O = a carboxylate + NADH + 2 H(+). Multifunctional alcohol dehydrogenase exhibiting NAD(+)-dependent dehydrogenase activities for 2,3-butanediol, ethanol and acetaldehyde, and reductase activities for acetoin (NADH-dependent), and diacetyl and acetaldehyde (independently of whether NADH or NADPH is the reductant). The rate of oxidation of 2,3-butanediol is much higher than for the oxidation of ethanol. Has acetaldehyde dehydrogenase activity leading to acetate formation. May function in the release of excess reducing power in the absence of exogenous hydrogen acceptors such as oxygen. This Cupriavidus necator (Alcaligenes eutrophus) protein is Alcohol dehydrogenase (adh).